Consider the following 419-residue polypeptide: Gamma-glutamyl phosphate reductase (419 aa).

The protein belongs to the gamma-glutamyl phosphate reductase family.

It localises to the cytoplasm. It catalyses the reaction L-glutamate 5-semialdehyde + phosphate + NADP(+) = L-glutamyl 5-phosphate + NADPH + H(+). The protein operates within amino-acid biosynthesis; L-proline biosynthesis; L-glutamate 5-semialdehyde from L-glutamate: step 2/2. Catalyzes the NADPH-dependent reduction of L-glutamate 5-phosphate into L-glutamate 5-semialdehyde and phosphate. The product spontaneously undergoes cyclization to form 1-pyrroline-5-carboxylate. This Mannheimia succiniciproducens (strain KCTC 0769BP / MBEL55E) protein is Gamma-glutamyl phosphate reductase.